The sequence spans 957 residues: Glycine dehydrogenase (decarboxylating) (957 aa).

Residue Lys-708 is modified to N6-(pyridoxal phosphate)lysine.

This sequence belongs to the GcvP family. As to quaternary structure, the glycine cleavage system is composed of four proteins: P, T, L and H. It depends on pyridoxal 5'-phosphate as a cofactor.

The enzyme catalyses N(6)-[(R)-lipoyl]-L-lysyl-[glycine-cleavage complex H protein] + glycine + H(+) = N(6)-[(R)-S(8)-aminomethyldihydrolipoyl]-L-lysyl-[glycine-cleavage complex H protein] + CO2. Functionally, the glycine cleavage system catalyzes the degradation of glycine. The P protein binds the alpha-amino group of glycine through its pyridoxal phosphate cofactor; CO(2) is released and the remaining methylamine moiety is then transferred to the lipoamide cofactor of the H protein. This chain is Glycine dehydrogenase (decarboxylating), found in Escherichia coli O1:K1 / APEC.